Reading from the N-terminus, the 937-residue chain is Protein translocase subunit SecA (937 aa).

Residues Q90, 108–112 (GEGKT), and D509 each bind ATP.

The protein belongs to the SecA family. As to quaternary structure, monomer and homodimer. Part of the essential Sec protein translocation apparatus which comprises SecA, SecYEG and auxiliary proteins SecDF. Other proteins may also be involved.

Its subcellular location is the cell inner membrane. It is found in the cellular thylakoid membrane. The protein resides in the cytoplasm. It carries out the reaction ATP + H2O + cellular proteinSide 1 = ADP + phosphate + cellular proteinSide 2.. Functionally, part of the Sec protein translocase complex. Interacts with the SecYEG preprotein conducting channel. Has a central role in coupling the hydrolysis of ATP to the transfer of proteins into and across the cell membrane, serving as an ATP-driven molecular motor driving the stepwise translocation of polypeptide chains across the membrane. Its function is as follows. Probably participates in protein translocation into and across both the cytoplasmic and thylakoid membranes in cyanobacterial cells. The chain is Protein translocase subunit SecA from Synechococcus sp. (strain CC9902).